Here is a 255-residue protein sequence, read N- to C-terminus: Imidazole glycerol phosphate synthase subunit HisF (255 aa).

Residues Asp-12 and Asp-131 contribute to the active site.

It belongs to the HisA/HisF family. Heterodimer of HisH and HisF.

The protein resides in the cytoplasm. It catalyses the reaction 5-[(5-phospho-1-deoxy-D-ribulos-1-ylimino)methylamino]-1-(5-phospho-beta-D-ribosyl)imidazole-4-carboxamide + L-glutamine = D-erythro-1-(imidazol-4-yl)glycerol 3-phosphate + 5-amino-1-(5-phospho-beta-D-ribosyl)imidazole-4-carboxamide + L-glutamate + H(+). Its pathway is amino-acid biosynthesis; L-histidine biosynthesis; L-histidine from 5-phospho-alpha-D-ribose 1-diphosphate: step 5/9. Its function is as follows. IGPS catalyzes the conversion of PRFAR and glutamine to IGP, AICAR and glutamate. The HisF subunit catalyzes the cyclization activity that produces IGP and AICAR from PRFAR using the ammonia provided by the HisH subunit. The chain is Imidazole glycerol phosphate synthase subunit HisF from Neisseria meningitidis serogroup C (strain 053442).